The primary structure comprises 368 residues: GDP-fucose transporter 1 (368 aa).

Transmembrane regions (helical) follow at residues 64–84 (LSTIASVIAFYFFISISLVFL), 98–118 (LFITWYQQIISFVSIYIMTSI), 141–161 (VLPVTAVLTGMVIFNNLCLEY), 166–186 (FYQVARSLTICFSLILTYIVL), 195–215 (TMACLVVFLGFVLGSAGEVNF), 217–237 (WLGIIFGLLSSFFVALYSIAV), 251–271 (LSIYNTAISIGLIFPLILVSG), 287–307 (FWFYMTVAGLMGYLISISVFM), and 332–352 (AVVFWGNPISTQNAVGILLVI).

It belongs to the TPT transporter family. SLC35C subfamily.

The protein resides in the golgi apparatus membrane. It catalyses the reaction GMP(out) + GDP-beta-L-fucose(in) = GMP(in) + GDP-beta-L-fucose(out). In terms of biological role, antiporter specific for GDP-l-fucose and depending on the concomitant reverse transport of GMP. Involved in GDP-fucose import from the cytoplasm into the Golgi lumen. The sequence is that of GDP-fucose transporter 1 (slc35c1) from Dictyostelium discoideum (Social amoeba).